We begin with the raw amino-acid sequence, 194 residues long: Probable proteasome subunit beta type-4 (194 aa).

This sequence belongs to the peptidase T1B family. In terms of assembly, the 26S proteasome consists of a 20S proteasome core and two 19S regulatory subunits. The 20S proteasome core is composed of 28 subunits that are arranged in four stacked rings, resulting in a barrel-shaped structure. The two end rings are each formed by seven alpha subunits, and the two central rings are each formed by seven beta subunits. The catalytic chamber with the active sites is on the inside of the barrel.

Its subcellular location is the cytoplasm. The protein localises to the nucleus. Its function is as follows. Non-catalytic component of the proteasome, a multicatalytic proteinase complex which is characterized by its ability to cleave peptides with Arg, Phe, Tyr, Leu, and Glu adjacent to the leaving group at neutral or slightly basic pH. The proteasome has an ATP-dependent proteolytic activity. This chain is Probable proteasome subunit beta type-4 (PRO2), found in Meyerozyma guilliermondii (strain ATCC 6260 / CBS 566 / DSM 6381 / JCM 1539 / NBRC 10279 / NRRL Y-324) (Yeast).